The primary structure comprises 548 residues: Elongator complex protein 3 (548 aa).

The 291-residue stretch at 83 to 373 (RTASGIAVVA…YRVQRDIPMP (291 aa)) folds into the Radical SAM core domain. Positions 100, 110, and 113 each coordinate [4Fe-4S] cluster. Acetyl-CoA-binding positions include Lys-165, 475–478 (ELHV), 498–500 (FGM), and Tyr-531. The N-acetyltransferase domain occupies 397–548 (TECRDVRTRE…EGPYMVKNLY (152 aa)).

This sequence belongs to the ELP3 family. As to quaternary structure, component of the elongator complex. The cofactor is [4Fe-4S] cluster.

The protein resides in the cytoplasm. The protein localises to the nucleus. It catalyses the reaction uridine(34) in tRNA + acetyl-CoA + S-adenosyl-L-methionine + H2O = 5-(carboxymethyl)uridine(34) in tRNA + 5'-deoxyadenosine + L-methionine + CoA + 2 H(+). It functions in the pathway tRNA modification; 5-methoxycarbonylmethyl-2-thiouridine-tRNA biosynthesis. Functionally, catalytic tRNA acetyltransferase subunit of the elongator complex which is required for multiple tRNA modifications, including mcm5U (5-methoxycarbonylmethyl uridine), mcm5s2U (5-methoxycarbonylmethyl-2-thiouridine), and ncm5U (5-carbamoylmethyl uridine). In the elongator complex, acts as a tRNA uridine(34) acetyltransferase by mediating formation of carboxymethyluridine in the wobble base at position 34 in tRNAs. Involved in neurogenesis. Involved in somite development. This is Elongator complex protein 3 from Danio rerio (Zebrafish).